Here is a 155-residue protein sequence, read N- to C-terminus: Sperm microtubule associated protein 1 (155 aa).

This chain is Sperm microtubule associated protein 1 (Spmap1), found in Mus musculus (Mouse).